The following is a 286-amino-acid chain: Pantothenate synthetase (286 aa).

An ATP-binding site is contributed by 30–37; the sequence is MGNLHSGH. The Proton donor role is filled by His-37. (R)-pantoate is bound at residue Gln-61. Gln-61 provides a ligand contact to beta-alanine. 149-152 serves as a coordination point for ATP; it reads GQKD. Position 155 (Gln-155) interacts with (R)-pantoate. Residues Val-178 and 186 to 189 each bind ATP; that span reads LSSR.

It belongs to the pantothenate synthetase family. As to quaternary structure, homodimer.

It is found in the cytoplasm. It catalyses the reaction (R)-pantoate + beta-alanine + ATP = (R)-pantothenate + AMP + diphosphate + H(+). It functions in the pathway cofactor biosynthesis; (R)-pantothenate biosynthesis; (R)-pantothenate from (R)-pantoate and beta-alanine: step 1/1. Functionally, catalyzes the condensation of pantoate with beta-alanine in an ATP-dependent reaction via a pantoyl-adenylate intermediate. This Pseudomonas fluorescens (strain Pf0-1) protein is Pantothenate synthetase.